The primary structure comprises 87 residues: Defensin alpha-like protein 1 (87 aa).

A signal peptide spans 1 to 19 (MKTLILLSALVLLALQVQA). The propeptide occupies 20-56 (DPIQEAEEETKTEEQPADEDQDVSVSFEGPEASAVQD). Residues 23-41 (QEAEEETKTEEQPADEDQD) show a composition bias toward acidic residues. The interval 23–43 (QEAEEETKTEEQPADEDQDVS) is disordered.

This sequence belongs to the alpha-defensin family. In terms of assembly, antiparallel homodimer; disulfide-linked. Specifically expressed in small intestine (jejunum and ileum). Probably expressed by Paneth cells at the base of intestinal crypts. Coexpressed with MMP7 in small intestine.

Its subcellular location is the secreted. Functionally, intestinal defense peptide. Has potent antibacterial activity against Gram-negative bacteria E.coli O157:H7, S.typhimurium DT104, and K.pneumoniae; and against Gram-positive bacteria S.aureus, methicillin-resistant S.aureus and L.monocytogenes. Remains active in the presence of NaCl and Mg(2+). Probably functions by disrupting bacterial membrane integrity. However, does not show cytotoxic activity towards human intestinal cells. The sequence is that of Defensin alpha-like protein 1 from Rattus norvegicus (Rat).